The following is a 185-amino-acid chain: Testis development-related protein (185 aa).

Disordered regions lie at residues 1–29 (MWKL…PPAA) and 121–156 (ADPE…ANSS).

It belongs to the TDRP family. Interacts with PRM2. Expressed in spermatogenic cells, especially in spermatocytes (at protein level).

It localises to the nucleus. The protein resides in the cytoplasm. Its function is as follows. Contributes to normal sperm motility, but not essential for male fertility. The protein is Testis development-related protein (TDRP) of Homo sapiens (Human).